The sequence spans 81 residues: Protein GPR15LG (81 aa).

The signal sequence occupies residues 1 to 24 (MRFLALTSLLCILLLCLSFFSAEG). 2 disulfide bridges follow: cysteine 40/cysteine 63 and cysteine 41/cysteine 60.

In terms of assembly, interacts with SUSD2; the interaction is direct.

The protein resides in the secreted. Highly cationic protein that has multiple functions. Acts as a chemotactic factor that mediates lymphocytes recruitment to epithelia through binding and activation of the G-protein coupled receptor GPR15. May be a tumor suppressor; together with SUSD2 has a growth inhibitory effect on colon cancer cells which includes G1 cell cycle arrest. May regulate keratinocyte proliferation. In addition, through activation of Mas-related G protein-coupled receptors (MRGPRs) contributes to pruritogenesis by activating itch-selective sensory neurons and mast cells degranulation. Functionally, has antimicrobial activity against Gram-positive bacteria, including Staphylococcus aureus and Actinomyces spec., and Mycoplasma hominis and lentivirus. This Sus scrofa (Pig) protein is Protein GPR15LG (GPR15LG).